A 118-amino-acid chain; its full sequence is MKTTRRDATRSRHQRVRRKVVGTAERPRLAVFRSNQHIYAQVIDDAQQHTLAAASTVESDLKSSSGATCDASTAVGKLVAERAIEKGIKAVVFDRGGNLYHGRVKALADAAREAGLEF.

Basic and acidic residues predominate over residues 1 to 10 (MKTTRRDATR). Positions 1–20 (MKTTRRDATRSRHQRVRRKV) are disordered. Basic residues predominate over residues 11-20 (SRHQRVRRKV).

This sequence belongs to the universal ribosomal protein uL18 family. As to quaternary structure, part of the 50S ribosomal subunit; part of the 5S rRNA/L5/L18/L25 subcomplex. Contacts the 5S and 23S rRNAs.

Functionally, this is one of the proteins that bind and probably mediate the attachment of the 5S RNA into the large ribosomal subunit, where it forms part of the central protuberance. This chain is Large ribosomal subunit protein uL18, found in Acaryochloris marina (strain MBIC 11017).